The primary structure comprises 1181 residues: WD repeat-containing protein 35 (1181 aa).

WD repeat units lie at residues 12-51 (PNNV…DDSK), 69-108 (GHSG…WYEE), 113-152 (RNKS…IWGK), 154-193 (LKGI…IMKM), and 502-539 (GTRD…LIQK).

As to quaternary structure, component of the IFT complex A (IFT-A) complex. IFT-A complex is divided into a core subcomplex composed of IFT122:IFT140:WDR19 which is associated with TULP3 and a peripheral subcomplex composed of IFT43:WDR35:TTC21B. Interacts directy with IFT122, ITF43 and TTC21B. Interacts with IFT43. Interacts with CFAP61.

The protein resides in the cytoplasm. It is found in the cytoskeleton. The protein localises to the microtubule organizing center. It localises to the centrosome. Its subcellular location is the cilium axoneme. The protein resides in the cilium basal body. In terms of biological role, as a component of the IFT complex A (IFT-A), a complex required for retrograde ciliary transport and entry into cilia of G protein-coupled receptors (GPCRs), it is involved in ciliogenesis and ciliary protein trafficking. May promote CASP3 activation and TNF-stimulated apoptosis. In Mus musculus (Mouse), this protein is WD repeat-containing protein 35.